The sequence spans 206 residues: Large ribosomal subunit protein uL4 (206 aa).

A disordered region spans residues 63-97 (MYKQKGTGRARHHSARAPQFRGGGKAHGPVVRSHE). Over residues 64-77 (YKQKGTGRARHHSA) the composition is skewed to basic residues.

It belongs to the universal ribosomal protein uL4 family. In terms of assembly, part of the 50S ribosomal subunit.

Its function is as follows. One of the primary rRNA binding proteins, this protein initially binds near the 5'-end of the 23S rRNA. It is important during the early stages of 50S assembly. It makes multiple contacts with different domains of the 23S rRNA in the assembled 50S subunit and ribosome. Forms part of the polypeptide exit tunnel. This is Large ribosomal subunit protein uL4 from Rhizobium leguminosarum bv. trifolii (strain WSM2304).